A 148-amino-acid chain; its full sequence is Ribosome maturation factor RimP (148 aa).

Belongs to the RimP family.

The protein localises to the cytoplasm. Its function is as follows. Required for maturation of 30S ribosomal subunits. The protein is Ribosome maturation factor RimP of Thermosipho africanus (strain TCF52B).